Reading from the N-terminus, the 931-residue chain is Kinesin heavy chain (931 aa).

The Kinesin motor domain occupies 6-329; the sequence is SIKVVARFRP…LRFGMRAKSI (324 aa). ATP-binding positions include 87–94 and 237–244; these read GQTGAGKS and GSEKVGKT. Residues 342–864 adopt a coiled-coil conformation; the sequence is AELKSLLKKA…VKERLELAKA (523 aa). 2 disordered regions span residues 388–465 and 886–931; these read TTDA…EKQL and AKPL…FTKS. Residues 402–419 show a composition bias toward polar residues; sequence STRPSTPSLISDSRSETP. Residues 432–456 are compositionally biased toward basic and acidic residues; sequence LDKDEREEFLRRENELQDQISEKES. Positions 902–931 are enriched in polar residues; sequence PTIQNLQGQNEGNTSSGSSSKRASWFFTKS.

It belongs to the TRAFAC class myosin-kinesin ATPase superfamily. Kinesin family. Kinesin subfamily.

It localises to the cytoplasm. Its subcellular location is the cytoskeleton. Kinesin is a microtubule-associated force-producing protein that may play a role in organelle transport. Its motor activity is directed toward the microtubule's plus end. The sequence is that of Kinesin heavy chain (KLP1) from Gibberella moniliformis (Maize ear and stalk rot fungus).